A 315-amino-acid polypeptide reads, in one-letter code: Gamma-hemolysin component C (315 aa).

Positions Met-1 to Ala-29 are cleaved as a signal peptide.

This sequence belongs to the aerolysin family. In terms of assembly, toxicity requires sequential binding and synergistic association of a class S and a class F component which form heterooligomeric complexes. HlgC (class S) associates with HlgB (class F) thus forming an CB toxin.

Its function is as follows. Toxin that seems to act by forming pores in the membrane of the cell. Has a hemolytic and a leucotoxic activity. This Staphylococcus aureus (strain MSSA476) protein is Gamma-hemolysin component C (hlgC).